The following is a 293-amino-acid chain: Probable endoribonuclease YicC (293 aa).

This sequence belongs to the YicC/YloC family. Requires a divalent metal cation as cofactor.

Functionally, negatively modulates sporulation, probably in response to nutrient conditions. Effects expression of sporulation regulator spo0A in an indirect manner, possibly via repression of the sinRR' operon. In terms of biological role, probably a ssRNA endonuclease. Might contribute to small RNA (sRNA) regulation. This is Probable endoribonuclease YicC from Clostridioides difficile (strain 630) (Peptoclostridium difficile).